A 445-amino-acid chain; its full sequence is POU domain, class 3, transcription factor 2 (445 aa).

Disordered regions lie at residues 63-173 (TALS…WRSA), 203-269 (LGAG…TPTS), 336-361 (EADS…KKRT), and 411-445 (EKRM…TPVQ). A compositionally biased stretch (gly residues) spans 68–90 (GGSGGGGGGGGGGGGGGGGGGDG). Low complexity predominate over residues 125–151 (QQQHQQQQQQQQQQQQQQQQQQQQQQQ). Residues 217-226 (LRDAHDEPHH) are compositionally biased toward basic and acidic residues. Residues 227–237 (ADHHPHPHSHP) show a composition bias toward basic residues. The segment covering 239–253 (QQPPPPPPPQGPPGH) has biased composition (pro residues). One can recognise a POU-specific domain in the interval 264–338 (EDTPTSDDLE…LLNKWLEEAD (75 aa)). Phosphoserine is present on S343. A DNA-binding region (homeobox) is located at residues 356–415 (KRKKRTSIEVSVKGALESHFLKCPKPSAQEITSLADSLQLEKEVVRVWFCNRRQKEKRMT).

It belongs to the POU transcription factor family. Class-3 subfamily. In terms of assembly, interacts with PQBP1. Interaction with ISL1. As to expression, expressed specifically at high levels in the brain.

It localises to the nucleus. In terms of biological role, transcription factor that plays a key role in neuronal differentiation. Binds preferentially to the recognition sequence which consists of two distinct half-sites, ('GCAT') and ('TAAT'), separated by a non-conserved spacer region of 0, 2, or 3 nucleotides. Acts as a transcriptional activator when binding cooperatively with SOX4, SOX11, or SOX12 to gene promoters. The combination of three transcription factors, ASCL1, POU3F2/BRN2 and MYT1L, is sufficient to reprogram fibroblasts and other somatic cells into induced neuronal (iN) cells in vitro. Acts downstream of ASCL1, accessing chromatin that has been opened by ASCL1, and promotes transcription of neuronal genes. The sequence is that of POU domain, class 3, transcription factor 2 (Pou3f2) from Rattus norvegicus (Rat).